A 380-amino-acid polypeptide reads, in one-letter code: tRNA pseudouridine synthase B (380 aa).

Catalysis depends on Asp63, which acts as the Nucleophile. The segment at 309 to 339 is disordered; the sequence is QNVEDDNDDNDDNDDNDDNDDNDDNDDNDDN. Residues 311 to 338 show a composition bias toward acidic residues; the sequence is VEDDNDDNDDNDDNDDNDDNDDNDDNDD.

Belongs to the pseudouridine synthase TruB family. Type 1 subfamily.

The enzyme catalyses uridine(55) in tRNA = pseudouridine(55) in tRNA. Its function is as follows. Responsible for synthesis of pseudouridine from uracil-55 in the psi GC loop of transfer RNAs. The polypeptide is tRNA pseudouridine synthase B (Psychrobacter arcticus (strain DSM 17307 / VKM B-2377 / 273-4)).